A 444-amino-acid polypeptide reads, in one-letter code: Trimethylamine monooxygenase (444 aa).

Cysteine 12, glutamate 37, glutamine 39, leucine 45, and tryptophan 46 together coordinate FAD. Positions 70 and 72 each coordinate NADP(+). Positions 72 and 125 each coordinate FAD. NADP(+) contacts are provided by tyrosine 170, serine 202, serine 203, serine 205, arginine 226, histidine 227, and asparagine 288. Positions 315 and 318 each coordinate FAD. Arginine 409 is an NADP(+) binding site.

It belongs to the FMO family. Homodimer. Requires FAD as cofactor.

The enzyme catalyses trimethylamine + NADPH + O2 = trimethylamine N-oxide + NADP(+) + H2O. Functionally, catalyzes the oxidation of trimethylamine (TMA) to produce trimethylamine N-oxide (TMAO). In vitro, has a broad substrate specificity, oxidizing many nitrogen- and sulfur-containing compounds, including dimethylamine (DMA), dimethylsulfide (DMS), dimethylsulfoxide (DMSO) and methimazole. TMA shows the highest affinity. This is Trimethylamine monooxygenase from Pelagibacter sp. (strain HTCC7211).